Consider the following 594-residue polypeptide: UvrABC system protein C (594 aa).

Positions 13-99 (NSSGVYQYFD…IKQLKPKYNI (87 aa)) constitute a GIY-YIG domain. A UVR domain is found at 205–240 (DRLIKELELKMERLSNNLRFEEALIYRDRIAKIQKI).

Belongs to the UvrC family. In terms of assembly, interacts with UvrB in an incision complex.

Its subcellular location is the cytoplasm. Functionally, the UvrABC repair system catalyzes the recognition and processing of DNA lesions. UvrC both incises the 5' and 3' sides of the lesion. The N-terminal half is responsible for the 3' incision and the C-terminal half is responsible for the 5' incision. In Helicobacter pylori (strain ATCC 700392 / 26695) (Campylobacter pylori), this protein is UvrABC system protein C.